A 640-amino-acid polypeptide reads, in one-letter code: Threonine--tRNA ligase (640 aa).

The region spanning 1–61 (MPTITLPDGS…THDATLQIIT (61 aa)) is the TGS domain. The interval 242–533 (DHRKIGKQLD…LIEHYAGVFP (292 aa)) is catalytic. Cys-333, His-384, and His-510 together coordinate Zn(2+).

Belongs to the class-II aminoacyl-tRNA synthetase family. In terms of assembly, homodimer. It depends on Zn(2+) as a cofactor.

It localises to the cytoplasm. The enzyme catalyses tRNA(Thr) + L-threonine + ATP = L-threonyl-tRNA(Thr) + AMP + diphosphate + H(+). Its function is as follows. Catalyzes the attachment of threonine to tRNA(Thr) in a two-step reaction: L-threonine is first activated by ATP to form Thr-AMP and then transferred to the acceptor end of tRNA(Thr). Also edits incorrectly charged L-seryl-tRNA(Thr). The polypeptide is Threonine--tRNA ligase (Pseudomonas putida (strain W619)).